The following is a 353-amino-acid chain: UDP-N-acetylglucosamine--N-acetylmuramyl-(pentapeptide) pyrophosphoryl-undecaprenol N-acetylglucosamine transferase (353 aa).

UDP-N-acetyl-alpha-D-glucosamine contacts are provided by residues 11–13 (SAG), arginine 164, serine 194, and glutamine 289.

The protein belongs to the glycosyltransferase 28 family. MurG subfamily.

The protein localises to the cell membrane. It carries out the reaction di-trans,octa-cis-undecaprenyl diphospho-N-acetyl-alpha-D-muramoyl-L-alanyl-D-glutamyl-meso-2,6-diaminopimeloyl-D-alanyl-D-alanine + UDP-N-acetyl-alpha-D-glucosamine = di-trans,octa-cis-undecaprenyl diphospho-[N-acetyl-alpha-D-glucosaminyl-(1-&gt;4)]-N-acetyl-alpha-D-muramoyl-L-alanyl-D-glutamyl-meso-2,6-diaminopimeloyl-D-alanyl-D-alanine + UDP + H(+). The protein operates within cell wall biogenesis; peptidoglycan biosynthesis. Its function is as follows. Cell wall formation. Catalyzes the transfer of a GlcNAc subunit on undecaprenyl-pyrophosphoryl-MurNAc-pentapeptide (lipid intermediate I) to form undecaprenyl-pyrophosphoryl-MurNAc-(pentapeptide)GlcNAc (lipid intermediate II). This chain is UDP-N-acetylglucosamine--N-acetylmuramyl-(pentapeptide) pyrophosphoryl-undecaprenol N-acetylglucosamine transferase, found in Clostridium kluyveri (strain ATCC 8527 / DSM 555 / NBRC 12016 / NCIMB 10680 / K1).